We begin with the raw amino-acid sequence, 111 residues long: Iron-sulfur cluster insertion protein ErpA (111 aa).

Iron-sulfur cluster-binding residues include C39, C103, and C105.

Belongs to the HesB/IscA family. Homodimer. It depends on iron-sulfur cluster as a cofactor.

In terms of biological role, required for insertion of 4Fe-4S clusters for at least IspG. This is Iron-sulfur cluster insertion protein ErpA from Acinetobacter baumannii (strain AB307-0294).